A 285-amino-acid chain; its full sequence is Small ribosomal subunit protein uS2 (285 aa).

The interval 262 to 285 (NDDWNEDDTAPAAPGAASWGGAAF) is disordered. Residues 271-285 (APAAPGAASWGGAAF) show a composition bias toward low complexity.

Belongs to the universal ribosomal protein uS2 family. As to quaternary structure, component of the small ribosomal subunit. Mature ribosomes consist of a small (40S) and a large (60S) subunit. The 40S subunit contains about 33 different proteins and 1 molecule of RNA (18S). The 60S subunit contains about 49 different proteins and 3 molecules of RNA (28S, 5.8S and 5S). Interacts with ribosomal protein S21.

The protein localises to the cytoplasm. Required for the assembly and/or stability of the 40S ribosomal subunit. Required for the processing of the 20S rRNA-precursor to mature 18S rRNA in a late step of the maturation of 40S ribosomal subunits. The chain is Small ribosomal subunit protein uS2 from Anopheles gambiae (African malaria mosquito).